Consider the following 1098-residue polypeptide: NACHT, LRR and PYD domains-containing protein 5 (1098 aa).

The Pyrin domain maps to 1 to 97 (MREAKIAPLS…SEMARDEMKK (97 aa)). A disordered region spans residues 104-131 (SEDSAPTKTDQGPSMKEVPGPREDPQDS). The span at 122-131 (PGPREDPQDS) shows a compositional bias: basic and acidic residues. The 324-residue stretch at 180–503 (LTVVLHGPPG…ALFYVLRGVE (324 aa)) folds into the NACHT domain. ATP is bound at residue 186–193 (GPPGVGKS). 7 LRR repeats span residues 851 to 871 (GLTHLSLSGDELGSKGMSLLC), 880 to 900 (GLQKLALNACSLDVAGCGFLA), 908 to 928 (HLTHLSLSMNPLEDPGMNLLC), 937 to 958 (PLRDLDLVNCRLTASCCKSLSN), 965 to 985 (RLRSLDLAANALGDEGIAALC), 993 to 1013 (TLTRLGLEACGLTSEGCKALS), and 1021 to 1041 (HLASLNLMRNDLGPRGMTTLC).

This sequence belongs to the NLRP family. Component of the subcortical maternal complex (SCMC), at least composed of NLRP5, KHDC3, OOEP, and TLE6. Within the complex, interacts with OOEP, KHDC3 and TLE6. The SCMC may facilitate translocation of its components between the nuclear and cytoplasmic compartments. As part of the SCMC interacts with the SCMC-associated protein ZBED3. As part of the SCMC interacts with the SCMC-associated protein CFL1/Cofilin-1. Interacts with PRKCE. Interacts with TUBB3 at cytoskeleton microtubules. In terms of processing, phosphorylated by PRKCE. Oocyte-specific.

Its subcellular location is the cytoplasm. The protein resides in the cytoplasmic vesicle. It is found in the secretory vesicle. The protein localises to the cortical granule. It localises to the mitochondrion. Its subcellular location is the nucleus. The protein resides in the nucleolus. It is found in the golgi apparatus. Component of the subcortical maternal complex (SCMC), a multiprotein complex that plays a key role in early embryonic development. The SCMC complex is a structural constituent of cytoplasmic lattices, which consist in fibrous structures found in the cytoplasm of oocytes and preimplantation embryos. They are required to store maternal proteins critical for embryonic development, such as proteins that control epigenetic reprogramming of the preimplantation embryo, and prevent their degradation or activation. Required for the localization of cortical granules to the cortex of oocytes, via association with the cortical actin scaffold. Required for cortical actin clearance prior to oocyte exocytosis and prevention of polyspermy. Involved in regulating post-fertilization Ca(2+) release and endoplasmic reticulum storage (ER) storage via regulation of cellular localization. May be involved in the localization of mitochondria to the cytoplasm and perinuclear region in oocytes and early stage embryos, independent of its role in CPL formation. This chain is NACHT, LRR and PYD domains-containing protein 5 (NLRP5), found in Bos taurus (Bovine).